Reading from the N-terminus, the 114-residue chain is MQPGGAPDMSALLAQAQQMQQQLMAAQAQIAAAEVTGESGGGLVRITGKGSGEVTSVQIDPKIVDPEDVETLQDLIIGALADLTSKTQELASQRLGPLAGGLGDLGGGLGLPGV.

Belongs to the YbaB/EbfC family. Homodimer.

It is found in the cytoplasm. The protein localises to the nucleoid. Functionally, binds to DNA and alters its conformation. May be involved in regulation of gene expression, nucleoid organization and DNA protection. The protein is Nucleoid-associated protein MAB_0319 of Mycobacteroides abscessus (strain ATCC 19977 / DSM 44196 / CCUG 20993 / CIP 104536 / JCM 13569 / NCTC 13031 / TMC 1543 / L948) (Mycobacterium abscessus).